We begin with the raw amino-acid sequence, 106 residues long: Large ribosomal subunit protein uL24 (106 aa).

Belongs to the universal ribosomal protein uL24 family. In terms of assembly, part of the 50S ribosomal subunit.

Functionally, one of two assembly initiator proteins, it binds directly to the 5'-end of the 23S rRNA, where it nucleates assembly of the 50S subunit. Its function is as follows. One of the proteins that surrounds the polypeptide exit tunnel on the outside of the subunit. This is Large ribosomal subunit protein uL24 from Dechloromonas aromatica (strain RCB).